Here is a 513-residue protein sequence, read N- to C-terminus: Serine/threonine-protein kinase PBL27 (513 aa).

The tract at residues 1–61 is disordered; it reads MSGCLPCFGS…KKELTAPKEG (61 aa). S-palmitoyl cysteine attachment occurs at residues Cys4 and Cys7. Basic and acidic residues-rich tracts occupy residues 15-27 and 38-57; these read AASK…ELSA and ISLD…ELTA. The Protein kinase domain maps to 83–360; it reads FRPECLLGEG…GDVVTALTYL (278 aa). ATP contacts are provided by residues 89–97 and Lys112; that span reads LGEGGFGRV. The active-site Proton acceptor is Asp210. Ser244 is modified (phosphoserine; by CERK1). Phosphothreonine; by CERK1 is present on residues Thr245 and Thr250. The span at 365-378 shows a compositional bias: polar residues; it reads FDPNAPSGQNSRSG. The tract at residues 365-513 is disordered; the sequence is FDPNAPSGQN…GPGSFDSTND (149 aa). Phosphoserine is present on residues Ser392 and Ser401. The segment covering 417–428 has biased composition (basic and acidic residues); the sequence is NSPDYRRRDMVR. Gly residues predominate over residues 434 to 446; that stretch reads SEGGSETGGGSGR. A compositionally biased stretch (polar residues) spans 456–473; the sequence is QESQRGSPASVGRSSRGT. Over residues 475–486 the composition is skewed to basic and acidic residues; the sequence is RNRDLDRERAVA. Residues 504–513 show a composition bias toward polar residues; that stretch reads GPGSFDSTND.

The protein belongs to the protein kinase superfamily. Ser/Thr protein kinase family. In terms of assembly, interacts with CERK1 (preferentially unphosphorylated) at the plasma membrane. Binds to MAPKKK5 at the plasma membrane; disassociation is induced by chitin perception by the CERK1 complex. Also associates with MAPKKK3. In terms of processing, phosphorylated by CERK1 upon elicitation by chitin. Post-translationally, palmitoylation at Cys-4 and Cys-7 are required for plasma membrane location.

The protein localises to the cell membrane. It carries out the reaction L-seryl-[protein] + ATP = O-phospho-L-seryl-[protein] + ADP + H(+). It catalyses the reaction L-threonyl-[protein] + ATP = O-phospho-L-threonyl-[protein] + ADP + H(+). Its function is as follows. Receptor-like cytoplasmic kinase involved in the transduction of signal between the host cell surface chitin receptor complex CERK1-LYK5 and the intracellular MAPKKK5-dependent mitogen-activated protein kinase (MAPK) cascade that leads to chitin-induced immunity. Phosphorylates and activates MAPKKK5 when phosphorylated by CERK1 after elicitation by chitin. The sequence is that of Serine/threonine-protein kinase PBL27 from Arabidopsis thaliana (Mouse-ear cress).